We begin with the raw amino-acid sequence, 198 residues long: MLPETTTLQPLPSVTTIMNEPPARSPMEDYYLFNQFQYNQNPYVYPPQPVYYNTWQDASTHHFDPFQSYQIPSPYEQPIQSSMCTTPLQPLEDSRIIFDESLTKNENEQKSFVEQDSSYESSGNRFGSQKGKKIAKVIRDACCSHCSTTTTTLWRKNDEGNLECNACNLYYRHNKVKRPLSLCKQKPTTRKRRQAKKE.

Residues 1-18 (MLPETTTLQPLPSVTTIM) show a composition bias toward polar residues. The segment at 1 to 20 (MLPETTTLQPLPSVTTIMNE) is disordered. A GATA-type zinc finger spans residues 143-167 (CSHCSTTTTTLWRKNDEGNLECNAC).

The protein resides in the nucleus. In terms of biological role, transcriptional activator that binds to the consensus sequence 5'-[AT]GATA[AG]-3'. Required for gut-specific differentiation, specifically acting with the GATA region-binding transcription factor elt-2 to control normal gene expression and promote normal formation of the intestine. May have a protective role in response to infection by Gram-negative bacteria such as P.aeruginosa. The chain is Transcription factor elt-7 from Caenorhabditis elegans.